The following is a 98-amino-acid chain: VQ motif-containing protein 1 (98 aa).

The VQ motif lies at 27-36 (FKTIVQELTG).

In terms of assembly, interacts with WRKY33.

It is found in the nucleus. May modulate WRKY transcription factor activities. The sequence is that of VQ motif-containing protein 1 from Arabidopsis thaliana (Mouse-ear cress).